The primary structure comprises 273 residues: HUWE1-associated protein modifying stress responses 2 (273 aa).

Disordered stretches follow at residues 146-181, 204-230, and 251-273; these read GKVP…SSSV, ISMR…FLED, and KRTS…NRMV. Pro residues predominate over residues 149–165; the sequence is PPAPPPPRTPRTPPKPP. 3 stretches are compositionally biased toward polar residues: residues 170 to 181, 208 to 218, and 254 to 267; these read SQAVATESSSSV, SGDSPQDSGVA, and SAQC…SPIQ. A nuclear localization signal region spans residues 249-273; that stretch reads IRKRTSAQCSDGITDSPIQKRNRMV.

This sequence belongs to the HAPSTR1 family. In terms of assembly, homooligomer. Heterooligomer with HAPSTR1; the interaction is direct and stabilizes HAPSTR1 independently of HUWE1. Interacts with HUWE1. As to expression, expressed in a tissue-restricted manner compared to HAPSTR1.

The protein localises to the nucleus. Functionally, together with HAPSTR1 plays a central regulatory role in the cellular response to molecular stressors, such as DNA damage, nutrient scarcity, and protein misfolding. Regulates these multiple stress response signaling pathways by stabilizing HAPSTR1, but also independently of HAPSTR1. The chain is HUWE1-associated protein modifying stress responses 2 from Homo sapiens (Human).